The chain runs to 1582 residues: ATP-binding cassette sub-family C member 8 (1582 aa).

Residues 1–30 are Extracellular-facing; sequence MPLAFCGTENHSAAYRVDQGVLNNGCFVDA. Cys-6 and Cys-26 are oxidised to a cystine. Asn-10 carries N-linked (GlcNAc...) asparagine glycosylation. The helical transmembrane segment at 31 to 47 threads the bilayer; the sequence is LNVVPHVFLLFITFPIL. Residues 48–72 are Cytoplasmic-facing; the sequence is FIGWGSQSSKVHIHHSTWLHFPGHN. Residues 73–89 traverse the membrane as a helical segment; sequence LRWILTFILLFVLVCEI. Topologically, residues 90–106 are extracellular; that stretch reads AEGILSDGVTESRHLHL. A helical membrane pass occupies residues 107 to 123; the sequence is YMPAGMAFMAAITSVVY. Over 124–136 the chain is Cytoplasmic; sequence YHNIETSNFPKLL. Residues 137 to 153 traverse the membrane as a helical segment; sequence IALLIYWTLAFITKTIK. Residues 154–169 lie on the Extracellular side of the membrane; it reads FVKFYDHAIGFSQLRF. The chain crosses the membrane as a helical span at residues 170-186; the sequence is CLTGLLVILYGMLLLVE. At 187–303 the chain is on the cytoplasmic side; that stretch reads VNVIRVRRYV…AFGRRLVLSS (117 aa). Residues 299 to 602 form the ABC transmembrane type-1 1 domain; that stretch reads LVLSSTFRIL…LSSVVRSTVK (304 aa). Residues 304–319 form a helical membrane-spanning segment; the sequence is TFRILADLLGFAGPLC. The Extracellular segment spans residues 320-356; sequence IFGIVDHLGKENHVFQPKTQFLGVYFVSSQEFLGNAY. Residues 357 to 372 form a helical membrane-spanning segment; the sequence is VLAVLLFLALLLQRTF. At 373–438 the chain is on the cytoplasmic side; that stretch reads LQASYYVAIE…MWFFFLCPNL (66 aa). Residues 439-454 form a helical membrane-spanning segment; sequence WAMPVQIIVGVILLYY. Residues 455–460 are Extracellular-facing; sequence ILGVSA. A helical membrane pass occupies residues 461-473; it reads LIGAAVIILLAPV. The Cytoplasmic segment spans residues 474-541; the sequence is QYFVATKLSQ…SLRAFAVYTS (68 aa). A helical transmembrane segment spans residues 542–557; that stretch reads ISIFMNTAIPIAAVLI. The Extracellular portion of the chain corresponds to 558 to 576; the sequence is TFVGHVSFFKESDFSPSVA. A helical transmembrane segment spans residues 577–592; sequence FASLSLFHILVTPLFL. Topologically, residues 593 to 1013 are cytoplasmic; the sequence is LSSVVRSTVK…YLSSAGILLL (421 aa). One can recognise an ABC transporter 1 domain in the interval 679–930; it reads VQIIGGFFTW…ECQLFEHWKT (252 aa). Positions 688, 716, 720, and 721 each coordinate ATP. Ser-720 provides a ligand contact to Mg(2+). Residues 741-768 are disordered; the sequence is SSLPDSEGEDPSNPERETAADSDARSRG. Positions 753–766 are enriched in basic and acidic residues; sequence NPERETAADSDARS. Gln-775 is a Mg(2+) binding site. Residues 939–950 are compositionally biased toward basic and acidic residues; sequence LEKETVMERKAP. The disordered stretch occupies residues 939 to 962; sequence LEKETVMERKAPEPSQGLPRAMSS. An ABC transmembrane type-1 2 domain is found at 1013 to 1307; sequence LSLLVFSQLL…MVRNLADMEI (295 aa). A helical transmembrane segment spans residues 1014–1031; that stretch reads SLLVFSQLLKHMVLVAID. Residues 1032–1067 lie on the Extracellular side of the membrane; the sequence is YWLAKWTDSALVLSPAARNCSLSQECALDQSVYAMV. An N-linked (GlcNAc...) asparagine glycan is attached at Asn-1050. Residues 1068–1084 form a helical membrane-spanning segment; it reads FTVLCSLGIALCLVTSV. The Cytoplasmic portion of the chain corresponds to 1085–1143; sequence TVEWTGLKVAKRLHRSLLNRIILAPMRFFETTPLGSILNRFSSDCNTIDQHIPSTLECL. The chain crosses the membrane as a helical span at residues 1144 to 1161; that stretch reads SRSTLLCVSALAVISYVT. Pro-1162 is a topological domain (extracellular). Residues 1163 to 1175 form a helical membrane-spanning segment; sequence VFLVALLPLAVVC. The Cytoplasmic segment spans residues 1176–1249; the sequence is YFIQKYFRVA…FLTAANRWLE (74 aa). The chain crosses the membrane as a helical span at residues 1250 to 1265; it reads VRMEYIGACVVLIAAA. Topologically, residues 1266-1281 are extracellular; the sequence is TSISNSLHRELSAGLV. The helical transmembrane segment at 1282-1297 threads the bilayer; the sequence is GLGLTYALMVSNYLNW. At 1298–1582 the chain is on the cytoplasmic side; the sequence is MVRNLADMEI…VFASFVRADK (285 aa). The region spanning 1345 to 1579 is the ABC transporter 2 domain; the sequence is IQIQNLSVRY…KDSVFASFVR (235 aa). Positions 1381, 1382, 1384, 1385, 1386, and 1387 each coordinate ADP. Ser-1483 contacts ATP.

Belongs to the ABC transporter superfamily. ABCC family. Conjugate transporter (TC 3.A.1.208) subfamily. As to quaternary structure, forms an heterooctamer with KCNJ11; four ABCC8/SUR1 molecules interact with one KCNJ11 homotetramer.

It localises to the cell membrane. KATP channels are regulated by cytoplasmic ATP/ADP ratios; ATP inhibits the channel by closing the pore, while ADP activates the channel. Activated by phosphatidylinositol 4,5-biphosphate (PtdIns(4,5)P2). Regulator subunit of pancreatic ATP-sensitive potassium channel (KATP), playing a major role in the regulation of insulin release. In pancreatic cells, it forms KATP channels with KCNJ11; KCNJ11 forms the channel pore while ABCC8 is required for activation and regulation. This chain is ATP-binding cassette sub-family C member 8 (Abcc8), found in Rattus norvegicus (Rat).